The chain runs to 597 residues: Plasmepsin V (597 aa).

At 1–551 (MNNYFLRKEN…EKENIFLKVS (551 aa)) the chain is on the lumenal side. Positions 33–88 (CNNVENKIDNVGKKIENVGKKIGDMENKNDNVENKNDNVENKNDNVGNKNDNVKNA) form a coiled coil. A compositionally biased stretch (basic and acidic residues) spans 58-75 (ENKNDNVENKNDNVENKN). Residues 58 to 83 (ENKNDNVENKNDNVENKNDNVGNKND) form a disordered region. One can recognise a Peptidase A1 domain in the interval 107 to 521 (YFLDIDIGKP…DLQQNQIAFI (415 aa)). D125 is an active-site residue. 7 disulfides stabilise this stretch: C135-C218, C138-C141, C162-C173, C167-C178, C266-C525, C396-C441, and C450-C486. Basic and acidic residues predominate over residues 289–298 (KEKQKMDKSD). Residues 289–323 (KEKQKMDKSDNNSSNKGNVSIKLKNNDKNDDEENN) are disordered. The segment covering 299-311 (NNSSNKGNVSIKL) has biased composition (low complexity). D372 is an active-site residue. A helical membrane pass occupies residues 552-572 (YINLYCLWLLLALTILLSLIL). Residues 573 to 597 (YVRKMFYMDYFPLSDQNKSPIQEST) lie on the Cytoplasmic side of the membrane.

Belongs to the peptidase A1 family. In terms of assembly, component of a complex composed of SPC25 and PMV; the interaction is mediated via the transmembrane domains. The complex interacts with the SEC61 channel-forming translocon complex and is involved in the recognition and import of PEXEL motif-containing proteins into the ER for subsequent export. Post-translationally, it is not clear if the zymogen has a cleavable propeptide. In vitro, appears to be cleaved between Asn-87 and Ala-88. Cleavage of the putative propeptide is dispensable for catalytic activity.

It localises to the endoplasmic reticulum membrane. Functionally, during the asexual blood stage, plays an essential role in the export of several proteins into the host erythrocytes by cleaving the pentameric localization motif RxLxE/Q/D (termed Plasmodium export element (PEXEL)) located downstream of the N-terminal secretory signal sequence. Specifically, cleaves after the leucine residue in the RxLxE/Q/D (or RxLxxE) motif of exported proteins including RESA, EMP2, EMP3, KAHRP, RIF/Rifin and STEVOR. Also, by regulating protein export, plays an essential role in gametocyte development and thus parasite transmission to the mosquito vector. This chain is Plasmepsin V, found in Plasmodium falciparum (isolate HB3).